We begin with the raw amino-acid sequence, 256 residues long: UPF0246 protein Maqu_2499 (256 aa).

It belongs to the UPF0246 family.

This is UPF0246 protein Maqu_2499 from Marinobacter nauticus (strain ATCC 700491 / DSM 11845 / VT8) (Marinobacter aquaeolei).